The sequence spans 480 residues: UDP-glucose 6-dehydrogenase 2 (480 aa).

NAD(+)-binding positions include 8–13 (GAGYVG), Asp33, Arg38, 86–90 (VNTPT), 127–128 (ST), and Glu161. Substrate-binding positions include 157–161 (EFLAE), 216–223 (KLAANAFL), and 256–269 (RIGP…VGFG). Cys272 functions as the Nucleophile in the catalytic mechanism. NAD(+) is bound at residue 272-275 (CFQK). Position 334–335 (334–335 (FK)) interacts with substrate. NAD(+) is bound at residue Arg342. Arg447 contacts substrate.

Belongs to the UDP-glucose/GDP-mannose dehydrogenase family. In terms of tissue distribution, preferentially expressed in roots.

The catalysed reaction is UDP-alpha-D-glucose + 2 NAD(+) + H2O = UDP-alpha-D-glucuronate + 2 NADH + 3 H(+). The protein operates within nucleotide-sugar biosynthesis; UDP-alpha-D-glucuronate biosynthesis; UDP-alpha-D-glucuronate from UDP-alpha-D-glucose: step 1/1. Inhibited by UDP-xylose. In terms of biological role, involved in the biosynthesis of UDP-glucuronic acid (UDP-GlcA), providing nucleotide sugars for cell-wall polymers. Required for the formation of cell wall ingrowths on the outer cell walls of nematode-induced syncytia. In Arabidopsis thaliana (Mouse-ear cress), this protein is UDP-glucose 6-dehydrogenase 2 (UGD2).